An 883-amino-acid chain; its full sequence is Glutamate receptor 2 (883 aa).

Residues 1–21 form the signal peptide; it reads MQKIMHISVLLSPVLWGLIFG. Residues 22 to 543 are Extracellular-facing; sequence VSSNSIQIGG…GVFSFLDPLA (522 aa). An intrachain disulfide couples C78 to C330. Residues N256, N370, N406, and N413 are each glycosylated (N-linked (GlcNAc...) asparagine). L-glutamate-binding residues include P499, T501, and R506. A helical membrane pass occupies residues 544 to 564; that stretch reads YEIWMCIVFAYIGVSVVLFLV. The Cytoplasmic portion of the chain corresponds to 565–591; the sequence is SRFSPYEWHTEEFEDGRETQSSESTNE. Positions 592-607 form an intramembrane region, helical; Pore-forming; it reads FGIFNSLWFSLGAFMQ. An intramembrane segment occupies 608-610; the sequence is QGC. The S-palmitoyl cysteine moiety is linked to residue C610. At 611-616 the chain is on the cytoplasmic side; the sequence is DISPRS. The helical transmembrane segment at 617–637 threads the bilayer; the sequence is LSGRIVGGVWWFFTLIIISSY. Residues 638–812 are Extracellular-facing; that stretch reads TANLAAFLTV…EKTSALSLSN (175 aa). S675 and T676 together coordinate L-glutamate. S683 carries the phosphoserine; by PKC modification. Residue S717 is modified to Phosphoserine; by PKG. L-glutamate is bound at residue E726. C739 and C794 are disulfide-bonded. The chain crosses the membrane as a helical span at residues 813-833; the sequence is VAGVFYILVGGLGLAMLVALI. The Cytoplasmic portion of the chain corresponds to 834-883; sequence EFCYKSRAEAKRMKVAKNPQNINPSSSQNSQNFATYKEGYNVYGIESVKI. C836 carries S-palmitoyl cysteine lipidation. Residues S860 and S863 each carry the phosphoserine modification. Residues 867-877 form a required for interaction with IQSEC1 region; it reads ATYKEGYNVYG. A Phosphotyrosine modification is found at Y876. S880 bears the Phosphoserine mark.

The protein belongs to the glutamate-gated ion channel (TC 1.A.10.1) family. GRIA2 subfamily. Homotetramer or heterotetramer of pore-forming glutamate receptor subunits. Tetramers may be formed by the dimerization of dimers. May interact with MPP4. Forms a ternary complex with GRIP1 and CSPG4. Interacts with ATAD1 in an ATP-dependent manner. ATAD1-catalyzed ATP hydrolysis disrupts binding to ATAD1 and to GRIP1 and leads to AMPAR complex disassembly. Interacts with GRIP2. Interacts with GRIP1. Interacts with NSF via its C-terminus. Interacts with CACNG2, PICK1 and GRIP2. Interacts with GRIA1 and SYNDIG1. Part of a complex containing GRIA2, NSF and NAPA and/or NAPB. Interacts with SNX27 (via PDZ domain); the interaction is required for recycling to the plasma membrane when endocytosed and prevent degradation in lysosomes. Interacts with LRFN1. Found in a complex with GRIA1, GRIA3, GRIA4, CNIH2, CNIH3, CACNG2, CACNG3, CACNG4, CACNG5, CACNG7 and CACNG8. Interacts with CACNG5. Interacts with OLFM2. Interacts with AP4B1, AP4E1 and AP4M1; probably indirect it mediates the somatodendritic localization of GRIA2 in neurons. Forms a complex with GRIP1, NSG1 and STX12; controls the intracellular fate of AMPAR and the endosomal sorting of the GRIA2 subunit toward recycling and membrane targeting. Interacts with IQSEC1; the interaction is required for ARF6 activation. Interacts (heterotetramer form) with CNIH2 and CNIH3; this interaction promotes expression at the plasma membrane and extensively modulates their gating properties by slowing deactivation and desensitization kinetics. Post-translationally, palmitoylated. Depalmitoylated upon L-glutamate stimulation. Cys-610 palmitoylation leads to Golgi retention and decreased cell surface expression. In contrast, Cys-836 palmitoylation does not affect cell surface expression but regulates stimulation-dependent endocytosis. Phosphorylation at Tyr-876 is required for interaction with IQSEC1 and ARF6 activation, which in turn triggers AMPAR internalization for persistent synaptic depression. In terms of processing, ubiquitinated by RNF167, leading to its degradation. Post-translationally, N-glycosylated. As to expression, detected in forebrain. Detected in dendrites of neuronal cells. Expressed in the pyramidal cell layers of CA1 and CA3 and in the granule cell layer of the dentate gyrus.

It localises to the cell membrane. The protein localises to the postsynaptic cell membrane. It is found in the postsynaptic density membrane. The enzyme catalyses Ca(2+)(in) = Ca(2+)(out). It catalyses the reaction Na(+)(in) = Na(+)(out). Ionotropic glutamate receptor that functions as a ligand-gated cation channel, gated by L-glutamate and glutamatergic agonists such as alpha-amino-3-hydroxy-5-methyl-4-isoxazolepropionic acid (AMPA), quisqualic acid, and kainic acid. L-glutamate acts as an excitatory neurotransmitter at many synapses in the central nervous system and plays an important role in fast excitatory synaptic transmission. Binding of the excitatory neurotransmitter L-glutamate induces a conformation change, leading to the opening of the cation channel, and thereby converts the chemical signal to an electrical impulse upon entry of monovalent and divalent cations such as sodium and calcium. The receptor then desensitizes rapidly and enters in a transient inactive state, characterized by the presence of bound agonist. In the presence of CACNG4 or CACNG7 or CACNG8, shows resensitization which is characterized by a delayed accumulation of current flux upon continued application of L-glutamate. Through complex formation with NSG1, GRIP1 and STX12 controls the intracellular fate of AMPAR and the endosomal sorting of the GRIA2 subunit toward recycling and membrane targeting. In Rattus norvegicus (Rat), this protein is Glutamate receptor 2.